A 245-amino-acid chain; its full sequence is Ureidoacrylate amidohydrolase RutB (245 aa).

The active-site Proton acceptor is the aspartate 38. Lysine 147 is a catalytic residue. Cysteine 180 (nucleophile) is an active-site residue.

The protein belongs to the isochorismatase family. RutB subfamily.

The enzyme catalyses (Z)-3-ureidoacrylate + H2O + H(+) = (Z)-3-aminoacrylate + NH4(+) + CO2. It carries out the reaction (Z)-3-ureidoacrylate + H2O = (Z)-3-aminoacrylate + carbamate + H(+). It catalyses the reaction (Z)-2-methylureidoacrylate + H2O + H(+) = (Z)-2-methylaminoacrylate + NH4(+) + CO2. In terms of biological role, hydrolyzes ureidoacrylate to form aminoacrylate and carbamate. The carbamate hydrolyzes spontaneously, thereby releasing one of the nitrogen atoms of the pyrimidine ring as ammonia and one of its carbon atoms as CO2. The polypeptide is Ureidoacrylate amidohydrolase RutB (Acinetobacter baylyi (strain ATCC 33305 / BD413 / ADP1)).